A 150-amino-acid polypeptide reads, in one-letter code: Large ribosomal subunit protein bL9 (150 aa).

The protein belongs to the bacterial ribosomal protein bL9 family.

Functionally, binds to the 23S rRNA. The protein is Large ribosomal subunit protein bL9 of Streptococcus pyogenes serotype M2 (strain MGAS10270).